The primary structure comprises 233 residues: MANVALIGCTGMVGAHILTSLIANPAVTRIDTISRRTPQAASSAPQAKLTTIVSTDTSKWASELSSLTPIPSIFISALGTTRAAAGSFENQYKLDHDLNLEMAKAARDAGTKVYVLISSSGADVKSNFAYTRMKGEIEEGVKALGFERTVILRPGLIAGQREESRPAEAVARFFAGALGKVHSSLKDGWAQESDVIGKAAVNAGLKALNGEVPAGSEKVWYLYGSDIIQHGKE.

Residues 1–36 constitute a mitochondrion transit peptide; it reads MANVALIGCTGMVGAHILTSLIANPAVTRIDTISRR.

The protein belongs to the FMP52 family.

It is found in the mitochondrion outer membrane. This is Protein fmp52, mitochondrial (fmp52) from Emericella nidulans (strain FGSC A4 / ATCC 38163 / CBS 112.46 / NRRL 194 / M139) (Aspergillus nidulans).